A 298-amino-acid polypeptide reads, in one-letter code: tRNA pseudouridine synthase B (298 aa).

The Nucleophile role is filled by aspartate 39.

This sequence belongs to the pseudouridine synthase TruB family. Type 1 subfamily.

It catalyses the reaction uridine(55) in tRNA = pseudouridine(55) in tRNA. Responsible for synthesis of pseudouridine from uracil-55 in the psi GC loop of transfer RNAs. The protein is tRNA pseudouridine synthase B of Lactobacillus delbrueckii subsp. bulgaricus (strain ATCC BAA-365 / Lb-18).